The chain runs to 927 residues: BTB/POZ domain-containing protein KCTD19 (927 aa).

The BTB 1 domain occupies 18 to 72; the sequence is NVGGWHFSVPRSKLAQFPDSLLWKEASALTSSENQRLFIDRDGSTFRHVHYYLYT. A Phosphoserine modification is found at Ser-270. Residues 399 to 486 form the BTB 2 domain; it reads IKLYVGSHWY…YHIPALSEAL (88 aa). The tract at residues 664-760 is disordered; sequence VEEASLHVPS…NANGTDNPGA (97 aa). The segment covering 731–743 has biased composition (basic and acidic residues); that stretch reads DWGKQRPKDRESP.

In terms of assembly, identified in a complex with ZNF541, HDAC1 and HSPA2. Identified in a complex with ZNF541 and HDAC1. Identified in a complex with HDAC1, HDAC2, DNTTIP1 and ZNF541. Detected in adult testis.

Its subcellular location is the nucleus. Transcription regulator which is essential for male fertility and for the completion of meiotic prophase in spermatocytes. Regulates progression of the pachytene stage of meiotic prophase and promotes the transcriptional activation activity ZNF541. Required for the organization of chromosomes during metaphase I. The sequence is that of BTB/POZ domain-containing protein KCTD19 (Kctd19) from Mus musculus (Mouse).